The sequence spans 334 residues: Heat-inducible transcription repressor HrcA (334 aa).

Belongs to the HrcA family.

In terms of biological role, negative regulator of class I heat shock genes (grpE-dnaK-dnaJ and groELS operons). Prevents heat-shock induction of these operons. In Verminephrobacter eiseniae (strain EF01-2), this protein is Heat-inducible transcription repressor HrcA.